Reading from the N-terminus, the 118-residue chain is D-dopachrome decarboxylase (118 aa).

Pro-2 bears the N-acetylproline mark.

The protein belongs to the MIF family. As to quaternary structure, homotrimer.

It localises to the cytoplasm. The catalysed reaction is D-dopachrome + H(+) = 5,6-dihydroxyindole + CO2. Tautomerization of D-dopachrome with decarboxylation to give 5,6-dihydroxyindole (DHI). The sequence is that of D-dopachrome decarboxylase (DDT) from Gallus gallus (Chicken).